The sequence spans 218 residues: Copper acquisition factor BIM1 (218 aa).

Positions 1 to 19 (MFALKFILITSFIASTALA) are cleaved as a signal peptide. 2 residues coordinate Cu(2+): H20 and H65. Disulfide bonds link C40–C144 and C110–C161. N-linked (GlcNAc...) asparagine glycosylation is found at N87, N91, and N124. Residue D138 coordinates Cu(2+). 2 N-linked (GlcNAc...) asparagine glycosylation sites follow: N158 and N170. The disordered stretch occupies residues 160 to 194 (TCTDDASRTSNASSTSSGSATATSAAATSSSSGTS). Positions 167 to 194 (RTSNASSTSSGSATATSAAATSSSSGTS) are enriched in low complexity. S190 carries the GPI-anchor amidated serine lipid modification. A propeptide spans 191–218 (SGTSGAIKEVVGLGALSLALGIAGLIIL) (removed in mature form).

Belongs to the X325 family. Cu(2+) serves as cofactor.

The protein localises to the cell membrane. Functionally, lytic polysaccharide monooxygenase-like protein that has diverged to biological functions other than polysaccharide degradation since it does not perform oxidative cleavage of polysaccharides. Cell surface-bound protein that functions in the copper-accumulation pathway shared by the CUF1-dependent copper transporter CTR1. Involved in maintaining cell wall integrity during copper deficiency. Binds Cu(2+) with an estimated 1:1 stoichiometry and might serve as an extracellular copper ligand. FRE4 and FRE7 metalloreductases probably function together with CTR1 and BIM1 to liberate the Cu(2+) bound to the BIM1 copper-binding site for subsequent import of Cu(+) into the cell by CTR1, via the reduction of BIM1-bound Cu(2+) to Cu(+) to reduce binding affinity for BIM1 but increase affinity for CTR1. Facilitates copper acquisition in the brain of mammalian hosts and acts as a copper-dependent virulence trait in fungal meningitis. While BIM1 plays a critical role in cryptococcal meningitis, at least in part through its role in copper acquisition, it could play additional roles during copper limitation or as a means to invade and colonize host tissues in the brain, by compromising host carbohydrate integrity via its lytic polysaccharide monooxygenase (LPMO) activity, which has still to be determined. The chain is Copper acquisition factor BIM1 from Cryptococcus neoformans var. neoformans serotype D (strain JEC21 / ATCC MYA-565) (Filobasidiella neoformans).